Consider the following 193-residue polypeptide: uncharacterized protein (193 aa).

This is an uncharacterized protein from Bacillus subtilis (strain 168).